Here is a 326-residue protein sequence, read N- to C-terminus: Olfactory receptor 11H2 (326 aa).

Residues 1 to 44 (MCPLTLHVTGLMNVSEPNSSFAFVNEFILQGFSCEWTIQIFLFS) are Extracellular-facing. 2 N-linked (GlcNAc...) asparagine glycosylation sites follow: Asn13 and Asn18. The helical transmembrane segment at 45 to 65 (LFTTIYALTITGNGAIAFVLW) threads the bilayer. Topologically, residues 66–72 (CDRRLHT) are cytoplasmic. The helical transmembrane segment at 73–93 (PMYMFLGNFSFLEIWYVSSTV) threads the bilayer. The Extracellular segment spans residues 94–112 (PKMLVNFLSEKKNISFAGC). An N-linked (GlcNAc...) asparagine glycan is attached at Asn106. Cys112 and Cys194 form a disulfide bridge. A helical transmembrane segment spans residues 113-133 (FLQFYFFFSLGTSECLLLTVM). The Cytoplasmic portion of the chain corresponds to 134 to 158 (AFDQYLAICRPLLYPNIMTGHLYAK). The chain crosses the membrane as a helical span at residues 159 to 179 (LVILCWVCGFLWFLIPIVLIS). Topologically, residues 180–216 (QKPFCGPNIIDHVVCDPGPLFALDCVSAPRIQLFCYT) are extracellular. The chain crosses the membrane as a helical span at residues 217 to 237 (LSSLVIFGNFLFIIGSYTLVL). The Cytoplasmic segment spans residues 238 to 259 (KAVLGMPSSTGRHKAFSTCGSH). Residues 260–280 (LAVVSLCYSPLMVMYVSPGLG) traverse the membrane as a helical segment. Over 281-287 (HSTGMQK) the chain is Extracellular. A helical membrane pass occupies residues 288-308 (IETLFYAMVTPLFNPLIYSLQ). The Cytoplasmic segment spans residues 309 to 326 (NKEIKAALRKVLGSSNII).

The protein belongs to the G-protein coupled receptor 1 family.

The protein localises to the cell membrane. In terms of biological role, odorant receptor. The protein is Olfactory receptor 11H2 (OR11H2) of Homo sapiens (Human).